Here is a 338-residue protein sequence, read N- to C-terminus: Cinnamoyl-CoA reductase 1 (338 aa).

NADP(+) is bound by residues 22 to 28, arginine 47, lysine 53, 73 to 74, 93 to 95, tyrosine 165, lysine 169, 192 to 195, and serine 207; these read GAGGFIG, DV, VAS, and PSMT. Cysteine 158 and cysteine 166 are disulfide-bonded. Lysine 169 acts as the Proton donor in catalysis.

This sequence belongs to the NAD(P)-dependent epimerase/dehydratase family. Dihydroflavonol-4-reductase subfamily. Interacts with RAC1 in a GTP-dependent manner.

The protein localises to the cytoplasm. The enzyme catalyses (E)-cinnamaldehyde + NADP(+) + CoA = (E)-cinnamoyl-CoA + NADPH + H(+). Its pathway is aromatic compound metabolism; phenylpropanoid biosynthesis. Its activity is regulated as follows. Activated by the small GTPase RAC1. Involved in the latter stages of lignin biosynthesis. Catalyzes one of the last steps of monolignol biosynthesis, the conversion of cinnamoyl-CoAs into their corresponding cinnamaldehydes. Probably involved in the formation of lignin in defense responses. The polypeptide is Cinnamoyl-CoA reductase 1 (Oryza sativa subsp. japonica (Rice)).